The following is a 33-amino-acid chain: Photosystem II reaction center protein Psb30 (33 aa).

A helical transmembrane segment spans residues 5 to 25 (LALTLVSLVLVVSAGPLVVVL).

Belongs to the Psb30/Ycf12 family. PSII is composed of 1 copy each of membrane proteins PsbA, PsbB, PsbC, PsbD, PsbE, PsbF, PsbH, PsbI, PsbJ, PsbK, PsbL, PsbM, PsbT, PsbX, PsbY, PsbZ, Psb30/Ycf12, peripheral proteins of the oxygen-evolving complex and a large number of cofactors. It forms dimeric complexes.

It is found in the plastid. Its subcellular location is the chloroplast thylakoid membrane. Its function is as follows. A core subunit of photosystem II (PSII), required for optimal photosynthesis, probably helps stabilize the reaction center. This is Photosystem II reaction center protein Psb30 from Chlamydomonas reinhardtii (Chlamydomonas smithii).